Here is a 572-residue protein sequence, read N- to C-terminus: Methionine--tRNA ligase (572 aa).

A 'HIGH' region motif is present at residues 11–21 (PYINGIKHLGN). Zn(2+)-binding residues include Cys-143, Cys-146, Cys-156, and Cys-159. The 'KMSKS' region motif lies at 346–350 (QFSTS). Thr-349 serves as a coordination point for ATP.

It belongs to the class-I aminoacyl-tRNA synthetase family. MetG type 1 subfamily. In terms of assembly, monomer. It depends on Zn(2+) as a cofactor.

The protein localises to the cytoplasm. It catalyses the reaction tRNA(Met) + L-methionine + ATP = L-methionyl-tRNA(Met) + AMP + diphosphate. Its function is as follows. Is required not only for elongation of protein synthesis but also for the initiation of all mRNA translation through initiator tRNA(fMet) aminoacylation. The protein is Methionine--tRNA ligase of Ruegeria pomeroyi (strain ATCC 700808 / DSM 15171 / DSS-3) (Silicibacter pomeroyi).